Here is a 1187-residue protein sequence, read N- to C-terminus: Non-receptor tyrosine-protein kinase TYK2 (1187 aa).

The region spanning 26-431 (GGLKVLLHWA…GYFRLTADSS (406 aa)) is the FERM domain. Residue tyrosine 292 is modified to Phosphotyrosine. The disordered stretch occupies residues 335 to 366 (KEEGSSGSSGRNPQASLFGKKAKAHKAVGQPA). Positions 339 to 349 (SSGSSGRNPQA) are enriched in polar residues. The SH2; atypical domain maps to 450 to 529 (GIHGPLLEPF…GRSFPSVREL (80 aa)). A phosphoserine mark is found at serine 499 and serine 525. The Protein kinase 1 domain occupies 589 to 875 (ITQLSHLGQG…LTRLQPHNLA (287 aa)). The residue at position 604 (tyrosine 604) is a Phosphotyrosine. The tract at residues 610-629 (VEGSGDPEEGKMDDEDPLVP) is disordered. Residues 614–626 (GDPEEGKMDDEDP) show a composition bias toward acidic residues. Serine 884 carries the phosphoserine modification. The Protein kinase 2 domain occupies 897–1176 (LKKIRDLGEG…PILKTVHEKY (280 aa)). ATP is bound by residues 903–911 (LGEGHFGKV) and lysine 930. Residue aspartate 1023 is the Proton acceptor of the active site. Position 1054 is a phosphotyrosine; by autocatalysis (tyrosine 1054). Phosphotyrosine is present on tyrosine 1055.

The protein belongs to the protein kinase superfamily. Tyr protein kinase family. JAK subfamily. As to quaternary structure, interacts (via FERM domain) with JAKMIP1. Interacts with PIK3R1; this interaction is important for cell migration. Interacts with MPL/TPOR. In terms of assembly, (Microbial infection) Interacts with Epstein-Barr virus protein LMP1; this interaction inhibits TYK2-mediated interferon signaling. (Microbial infection) Interacts with papillomavirus-18 protein E6; this interaction impairs JAK-STAT activation by interferon-alpha. As to quaternary structure, (Microbial infection) Interacts with Epstein-Barr virus (EBV) tegument protein BGLF2; this interaction participates in the inhibition of type I IFN signaling by the virus. In terms of processing, phosphorylated. Phosphorylation by JAK1 at Tyr-1054 and Tyr-1055 induces kinase activation. Observed in all cell lines analyzed. Expressed in a variety of lymphoid and non-lymphoid cell lines.

It catalyses the reaction L-tyrosyl-[protein] + ATP = O-phospho-L-tyrosyl-[protein] + ADP + H(+). Its activity is regulated as follows. The protein kinase 1 domain (also termed pseudokinase domain) mediates autoinhibition of the TYK2 kinase domain. Functionally, tyrosine kinase of the non-receptor type involved in numerous cytokines and interferons signaling, which regulates cell growth, development, cell migration, innate and adaptive immunity. Plays both structural and catalytic roles in numerous interleukins and interferons (IFN-alpha/beta) signaling. Associates with heterodimeric cytokine receptor complexes and activates STAT family members including STAT1, STAT3, STAT4 or STAT6. The heterodimeric cytokine receptor complexes are composed of (1) a TYK2-associated receptor chain (IFNAR1, IL12RB1, IL10RB or IL13RA1), and (2) a second receptor chain associated either with JAK1 or JAK2. In response to cytokine-binding to receptors, phosphorylates and activates receptors (IFNAR1, IL12RB1, IL10RB or IL13RA1), creating docking sites for STAT members. In turn, recruited STATs are phosphorylated by TYK2 (or JAK1/JAK2 on the second receptor chain), form homo- and heterodimers, translocate to the nucleus, and regulate cytokine/growth factor responsive genes. Negatively regulates STAT3 activity by promototing phosphorylation at a specific tyrosine that differs from the site used for signaling. The chain is Non-receptor tyrosine-protein kinase TYK2 (TYK2) from Homo sapiens (Human).